Reading from the N-terminus, the 202-residue chain is GTP cyclohydrolase 1 (202 aa).

Zn(2+) is bound by residues Cys90, His93, and Cys163.

This sequence belongs to the GTP cyclohydrolase I family. In terms of assembly, toroid-shaped homodecamer, composed of two pentamers of five dimers.

The enzyme catalyses GTP + H2O = 7,8-dihydroneopterin 3'-triphosphate + formate + H(+). It functions in the pathway cofactor biosynthesis; 7,8-dihydroneopterin triphosphate biosynthesis; 7,8-dihydroneopterin triphosphate from GTP: step 1/1. In Mycolicibacterium vanbaalenii (strain DSM 7251 / JCM 13017 / BCRC 16820 / KCTC 9966 / NRRL B-24157 / PYR-1) (Mycobacterium vanbaalenii), this protein is GTP cyclohydrolase 1.